We begin with the raw amino-acid sequence, 208 residues long: Guanylate kinase (208 aa).

Positions 4 to 185 constitute a Guanylate kinase-like domain; the sequence is GNLYILSAPS…ALADLVHILR (182 aa). An ATP-binding site is contributed by 11-18; it reads APSGAGKS.

It belongs to the guanylate kinase family.

The protein localises to the cytoplasm. The catalysed reaction is GMP + ATP = GDP + ADP. Functionally, essential for recycling GMP and indirectly, cGMP. This is Guanylate kinase from Mannheimia succiniciproducens (strain KCTC 0769BP / MBEL55E).